The chain runs to 103 residues: Isocitrate dehydrogenase [NAD] subunit beta, mitochondrial (103 aa).

It belongs to the isocitrate and isopropylmalate dehydrogenases family. Heterooligomer of subunits alpha (IDH3A), beta (IDH3B), and gamma (IDH3G) in the apparent ratio of 2:1:1. The heterodimer containing one IDH3A and one IDH3B subunit and the heterodimer containing one IDH3A and one IDH3G subunit assemble into a heterotetramer (which contains two subunits of IDH3A, one of IDH3B and one of IDH3G) and further into the heterooctamer.

It is found in the mitochondrion. Its activity is regulated as follows. The heterotetramer and the heterodimer composed of IDH3A and IDH3G subunits can be allosterically activated by citrate (CIT) or/and ADP, and the two activators can act independently or synergistically. The heterodimer composed of IDH3A and IDH3B subunits cannot be allosterically regulated and the allosteric regulation of the heterotetramer is through the IDH3G subunit and not the IDH3B subunit. The IDH3G subunit contains the allosteric site which consists of a CIT-binding site and an ADP-binding site, and the binding of CIT and ADP causes conformational changes at the allosteric site which are transmitted to the active site in the catalytic subunit (IDH3A) through a cascade of conformational changes at the heterodimer interface, leading to stabilization of the isocitrate-binding at the active site and thus activation of the enzyme. ATP can activate the heterotetramer and the heterodimer composed of IDH3A and IDH3G subunits at low concentrations but inhibits their activities at high concentrations, whereas ATP exhibits only inhibitory effect on the heterodimer composed of IDH3A and IDH3B subunits. In terms of biological role, plays a structural role to facilitate the assembly and ensure the full activity of the enzyme catalyzing the decarboxylation of isocitrate (ICT) into alpha-ketoglutarate. The heterodimer composed of the alpha (IDH3A) and beta (IDH3B) subunits and the heterodimer composed of the alpha (IDH3A) and gamma (IDH3G) subunits, have considerable basal activity but the full activity of the heterotetramer (containing two subunits of IDH3A, one of IDH3B and one of IDH3G) requires the assembly and cooperative function of both heterodimers. The polypeptide is Isocitrate dehydrogenase [NAD] subunit beta, mitochondrial (IDH3B) (Sus scrofa (Pig)).